Reading from the N-terminus, the 296-residue chain is Ribosomal protein L11 methyltransferase (296 aa).

Residues threonine 139, glycine 163, aspartate 185, and asparagine 232 each coordinate S-adenosyl-L-methionine.

This sequence belongs to the methyltransferase superfamily. PrmA family.

The protein localises to the cytoplasm. The catalysed reaction is L-lysyl-[protein] + 3 S-adenosyl-L-methionine = N(6),N(6),N(6)-trimethyl-L-lysyl-[protein] + 3 S-adenosyl-L-homocysteine + 3 H(+). Methylates ribosomal protein L11. This chain is Ribosomal protein L11 methyltransferase, found in Rippkaea orientalis (strain PCC 8801 / RF-1) (Cyanothece sp. (strain PCC 8801)).